The following is a 93-amino-acid chain: Large ribosomal subunit protein uL23cz/uL23cy (93 aa).

This sequence belongs to the universal ribosomal protein uL23 family. In terms of assembly, part of the 50S ribosomal subunit.

The protein resides in the plastid. It localises to the chloroplast. Its function is as follows. Binds to 23S rRNA. This chain is Large ribosomal subunit protein uL23cz/uL23cy (rpl23-A), found in Coffea arabica (Arabian coffee).